The following is a 335-amino-acid chain: MSLDIDQIALHQLIKRDEQNLELVLRESLLEPNATVVEMMAELHRVYSAKSKAYGLFNEESELAQALRLQRQGEEEFLAFSRAATGRLRDELAKYPFAEGGIVLFCQYRYLAVEYLLVAVLNNLSSMRVNEELDIRSTHYLDINHADIVARIDLTEWETNPESTRYLTFLKGRVGRKVADFFMDFLGASEGLNAKAQNRGLLQAVDDFAADAQLDKSERQNVRQQVYAYCNEQLQAGEEIELESLSKELAGVSEKSFQEFTAEQGYELEESFPADRSTLRQLTKFAGSGGGLTINFDAMLLGERVFWDPATDTLTIKGTPPNLRDQLQRRTSGGN.

The protein belongs to the YejK family.

It is found in the cytoplasm. Its subcellular location is the nucleoid. This Klebsiella pneumoniae subsp. pneumoniae (strain ATCC 700721 / MGH 78578) protein is Nucleoid-associated protein KPN78578_25800.